The chain runs to 339 residues: Glycerol-3-phosphate dehydrogenase [NAD(P)+] (339 aa).

Residues Ser15, Tyr16, His36, and Lys110 each coordinate NADPH. The sn-glycerol 3-phosphate site is built by Lys110, Gly139, and Thr141. An NADPH-binding site is contributed by Ala143. Residues Lys195, Asp248, Ser258, Arg259, and Asn260 each contribute to the sn-glycerol 3-phosphate site. Lys195 (proton acceptor) is an active-site residue. Residue Arg259 participates in NADPH binding. NADPH is bound by residues Val283 and Glu285.

Belongs to the NAD-dependent glycerol-3-phosphate dehydrogenase family.

Its subcellular location is the cytoplasm. It carries out the reaction sn-glycerol 3-phosphate + NAD(+) = dihydroxyacetone phosphate + NADH + H(+). The enzyme catalyses sn-glycerol 3-phosphate + NADP(+) = dihydroxyacetone phosphate + NADPH + H(+). It participates in membrane lipid metabolism; glycerophospholipid metabolism. Functionally, catalyzes the reduction of the glycolytic intermediate dihydroxyacetone phosphate (DHAP) to sn-glycerol 3-phosphate (G3P), the key precursor for phospholipid synthesis. The polypeptide is Glycerol-3-phosphate dehydrogenase [NAD(P)+] (Enterobacter sp. (strain 638)).